The chain runs to 427 residues: Enolase (427 aa).

Residue Q163 participates in (2R)-2-phosphoglycerate binding. E205 acts as the Proton donor in catalysis. Mg(2+)-binding residues include D242, E285, and D312. Positions 337, 366, 367, and 388 each coordinate (2R)-2-phosphoglycerate. K337 (proton acceptor) is an active-site residue.

This sequence belongs to the enolase family. Mg(2+) serves as cofactor.

It is found in the cytoplasm. The protein resides in the secreted. The protein localises to the cell surface. The enzyme catalyses (2R)-2-phosphoglycerate = phosphoenolpyruvate + H2O. It functions in the pathway carbohydrate degradation; glycolysis; pyruvate from D-glyceraldehyde 3-phosphate: step 4/5. Catalyzes the reversible conversion of 2-phosphoglycerate (2-PG) into phosphoenolpyruvate (PEP). It is essential for the degradation of carbohydrates via glycolysis. The sequence is that of Enolase from Burkholderia mallei (strain NCTC 10247).